The following is a 95-amino-acid chain: Acylphosphatase (95 aa).

Residues 7-95 form the Acylphosphatase-like domain; the sequence is RLTAWVLGTV…PKGEVGFRTR (89 aa). Catalysis depends on residues Arg22 and Asn40.

Belongs to the acylphosphatase family.

The enzyme catalyses an acyl phosphate + H2O = a carboxylate + phosphate + H(+). In Corynebacterium diphtheriae (strain ATCC 700971 / NCTC 13129 / Biotype gravis), this protein is Acylphosphatase (acyP).